Here is a 220-residue protein sequence, read N- to C-terminus: pH-response regulator palI/RIM9 homolog 1 (220 aa).

Topologically, residues 1-5 (MSHFK) are cytoplasmic. The chain crosses the membrane as a helical span at residues 6-26 (IVFLTSLSLALVFELFNTISV). The Extracellular portion of the chain corresponds to 27–89 (PITSHLFISE…NHAKYALSKL (63 aa)). A helical membrane pass occupies residues 90–110 (LLVHVLSFVCVLVFWLFAILI). At 111 to 121 (CIKWLNTSKSV) the chain is on the cytoplasmic side. The helical transmembrane segment at 122–142 (LLFAVGWSMVTFMVSLLGFLI) threads the bilayer. Residues 143–155 (DVLMFASHVTWSS) are Extracellular-facing. A helical membrane pass occupies residues 156–176 (WLMLVSAFFVALSGILLCLMI). Topologically, residues 177-220 (RDLSYRRFVKLQGEVDVCVPMTEPRDPDELNEIWKKKTSKREIL) are cytoplasmic.

Belongs to the palI/RIM9 family.

It is found in the cell membrane. Functionally, required for the proteolytic cleavage of the transcription factor RIM101 in response to alkaline ambient pH. This Kluyveromyces lactis (strain ATCC 8585 / CBS 2359 / DSM 70799 / NBRC 1267 / NRRL Y-1140 / WM37) (Yeast) protein is pH-response regulator palI/RIM9 homolog 1.